A 432-amino-acid polypeptide reads, in one-letter code: MASSVRLVKKPVLVAPVDPTPSTVLSLSSLDSQLFLRFPIEYLLVYASPHGVDRAVTAARVKAALARSLVPYYPLAGRVKTRPDSTGLDVVCQAQGAGLLEAVSDYTASDFQRAPRSVTEWRKLLLVEVFKVVPPLVVQLTWLSDGCVALGVGFSHCVIDGIGSSEFLNLFAELATGRARLSEFQPKPVWDRHLLNSAGRTNLGTHPEFGRVPDLSGFVTRFTQERLSPTSITFDKTWLKELKNIAMSTSQPGEFPYTSFEVLSGHIWRSWARSLNLPAKQVLKLLFSINIRNRVKPSLPAGYYGNAFVLGCAQTSVKDLTEKGLGYCADLVRGAKERVGDEYAREVVESVSWPRRASPDSVGVLIISQWSRLGLDRVDFGLGRPVQVGPICCDRYCLFLPVRDRTESVKVMVAVPTSAVDRYEYFIRSPYS.

Active-site proton acceptor residues include His156 and Asp379.

This sequence belongs to the plant acyltransferase family. As to expression, expressed in fruit.

The enzyme catalyses 2-(methylsulfanyl)acetyl-CoA + butan-1-ol = butyl 2-(methylsulfanyl)acetate + CoA. The catalysed reaction is ethanol + acetyl-CoA = ethyl acetate + CoA. It catalyses the reaction butan-1-ol + acetyl-CoA = butyl acetate + CoA. It carries out the reaction butan-1-ol + propanoyl-CoA = butyl propanoate + CoA. Functionally, involved in the biosynthesis of volatile esters which confer kiwifruit flavor. Alcohol acyl transferase that can use a wide range of alcohols as substrate to produce esters. Exhibits acetyl-CoA:alcohol O-acyltransferase activity. This is Alcohol acyltransferase 9 from Actinidia deliciosa (Kiwi).